Here is a 1096-residue protein sequence, read N- to C-terminus: Lysine-specific demethylase 4B (1096 aa).

One can recognise a JmjN domain in the interval 15–57 (IMTFRPTMEEFKDFNKYVAYIESQGAHRAGLAKIIPPKEWKPR). Position 133 (Y133) interacts with 2-oxoglutarate. The 164-residue stretch at 146–309 (VAQWNIGSLR…YGKVATQCTC (164 aa)) folds into the JmjC domain. Fe cation is bound by residues H189 and E191. 2-oxoglutarate contacts are provided by N199 and K207. Residues C235 and H241 each coordinate Zn(2+). 2-oxoglutarate is bound at residue K242. H277 contributes to the Fe cation binding site. Positions 307 and 309 each coordinate Zn(2+). The segment covering 369 to 382 (LLRRSHRKRSQPKK) has biased composition (basic residues). Disordered regions lie at residues 369-478 (LLRR…SEEA) and 557-649 (KGPT…VSDP). Positions 391-406 (PGEGTAGAALLEEAGG) are enriched in low complexity. Residues 413-425 (GPEVDPEEEEEEP) show a composition bias toward acidic residues. Basic and acidic residues predominate over residues 430–443 (HGREAEGAEEDGRG). Residues 444 to 458 (KLRPTKAKSERKKKS) show a composition bias toward basic residues. S566 carries the phosphoserine modification. An N6-acetyllysine modification is found at K602. Positions 632-648 (SSDEEASPFSGEEDVSD) are enriched in acidic residues. The segment at 731–789 (MCFTSGGENTEPLPANSYIGDDGTSPLIACGKCCLQVHASCYGIRPELVNEGWTCSRCA) adopts a PHD-type 1 zinc-finger fold. The segment at 794–827 (TAECCLCNLRGGALQMTTDRRWIHVICAIAVPEA) adopts a C2HC pre-PHD-type zinc-finger fold. Residues 850–907 (LKCVYCRKRMKKVSGACIQCSYEHCSTSFHVTCAHAAGVLMEPDDWPYVVSITCLKHK) form a PHD-type 2 zinc finger. Tudor domains are found at residues 917–974 (RAVS…CVQL) and 975–1031 (GPPS…EELP). The disordered stretch occupies residues 1037-1073 (RLSLSTGAPQEPAFSGEEAKAAKRPRVGTPLATEDSG). Residue T1065 is modified to Phosphothreonine.

This sequence belongs to the JHDM3 histone demethylase family. Requires Fe(2+) as cofactor.

Its subcellular location is the nucleus. It carries out the reaction N(6),N(6),N(6)-trimethyl-L-lysyl(9)-[histone H3] + 2 2-oxoglutarate + 2 O2 = N(6)-methyl-L-lysyl(9)-[histone H3] + 2 formaldehyde + 2 succinate + 2 CO2. Its function is as follows. Histone demethylase that specifically demethylates 'Lys-9' of histone H3, thereby playing a role in histone code. Does not demethylate histone H3 'Lys-4', H3 'Lys-27', H3 'Lys-36' nor H4 'Lys-20'. Only able to demethylate trimethylated H3 'Lys-9', with a weaker activity than KDM4A, KDM4C and KDM4D. Demethylation of Lys residue generates formaldehyde and succinate. Plays a critical role in the development of the central nervous system (CNS). This chain is Lysine-specific demethylase 4B (KDM4B), found in Homo sapiens (Human).